We begin with the raw amino-acid sequence, 196 residues long: [1-hydroxy-2-(trimethylamino)ethyl]phosphonate dioxygenase (glycine-betaine-forming) (196 aa).

Y30 is a binding site for [(1R)-1-hydroxy-2-(trimethylamino)ethyl]phosphonate. The Fe cation site is built by Y30, H40, H64, and D65. In terms of domain architecture, HD spans 37–156 (MAEHMLQGAT…VAEFEKNPNL (120 aa)). H68, H86, H109, K113, S131, S134, and R163 together coordinate [(1R)-1-hydroxy-2-(trimethylamino)ethyl]phosphonate. Residues H86 and H109 each coordinate Fe cation. D166 is a Fe cation binding site.

Fe cation is required as a cofactor.

It carries out the reaction [(1R)-1-hydroxy-2-(trimethylamino)ethyl]phosphonate + O2 = glycine betaine + phosphate + 2 H(+). Involved in the degradation of the naturally occurring organophosphonate 2-(trimethylammonio)ethylphosphonate (TMAEP). Catalyzes the O(2)-dependent cleavage of (R)-1-hydroxy-2-(trimethylammonio)ethylphosphonate (OH-TMAEP) to yield glycine betaine and phosphate. Is highly specific for its N-trimethylated substrate. This Leisingera caerulea (Phaeobacter caeruleus) protein is [1-hydroxy-2-(trimethylamino)ethyl]phosphonate dioxygenase (glycine-betaine-forming).